Reading from the N-terminus, the 115-residue chain is Xenovulene A biosynthesis cluster protein asL2 (115 aa).

Part of the gene cluster that mediates the biosynthesis of xenovulene A, an unusual meroterpenoid that has potent inhibitory effects on the human gamma-aminobutyrate A (GABAA) benzodiazepine receptor. The first step of xenovulene A biosynthesis is the biosynthesis of 3-methylorcinaldehyde performed by the non-reducing polyketide synthase aspks1. The salicylate hydroxylase asL1 then catalyzes the oxidative dearomatization of 3-methylorcinaldehyde to yield a dearomatized hydroxycyclohexadione. The 2-oxoglutarate-dependent dioxygenase asL3 further catalyzes the oxidative ring expansion to provide the first tropolone metabolite. The cytochrome P450 monooxygenase asR2 allows the synthesis of tropolone hemiacetal. In parallel, a previously unrecognised class of terpene cyclase, asR6, produces alpha-humulene from farnesylpyrophosphate (FPP). The putative Diels-Alderase asR5 probably catalyzes the formation of the tropolone-humulene skeleton by linking humulene and the polyketide moiety. Oxidative-ring contractions catalyzed by asL4 and asL6 then processively remove carbon atoms from the polyketide to yield xenovulene A. The sequence is that of Xenovulene A biosynthesis cluster protein asL2 from Sarocladium schorii (Acremonium strictum (strain IMI 501407)).